We begin with the raw amino-acid sequence, 456 residues long: Choline kinase (456 aa).

This sequence belongs to the choline/ethanolamine kinase family. Monomer. Mg(2+) is required as a cofactor.

It localises to the cytoplasm. Its subcellular location is the nucleus. It carries out the reaction choline + ATP = phosphocholine + ADP + H(+). It participates in phospholipid metabolism; phosphatidylcholine biosynthesis; phosphocholine from choline: step 1/1. Functionally, catalyzes the committed step in the synthesis of phosphatidylcholine by the CDP-choline pathway. In Schizosaccharomyces pombe (strain 972 / ATCC 24843) (Fission yeast), this protein is Choline kinase.